The following is a 245-amino-acid chain: MDTGGSARLCLALVLISLGVMLTATQKSVVSLDPPWIRILTGDKVTLICNGNNSSQMNSTKWIHNDSISNVKSSHWVIVSATIQDSGKYICQKQGFYKSKPVYLNVMQEWLLLQSSADVVLDNGSFDIRCRSWKKWKVHKVIYYKDDIAFKYSYDSNNISIRKATFNDSGSYHCTGYLNKVECKSDKFSIAVVKDYTIEYRWLQLIFPSLAVILFAVDTGLWFSTHKQFESILKIQKTGKGKKKG.

The signal sequence occupies residues 1–23 (MDTGGSARLCLALVLISLGVMLT). Topologically, residues 24-204 (ATQKSVVSLD…DYTIEYRWLQ (181 aa)) are extracellular. Ig-like domains are found at residues 28-103 (SVVS…KPVY) and 113-181 (LQSS…LNKV). C49 and C91 are joined by a disulfide. Residues N52, N53, N58, N65, N123, N158, and N167 are each glycosylated (N-linked (GlcNAc...) asparagine). A disulfide bond links C130 and C174. Residues 205-223 (LIFPSLAVILFAVDTGLWF) traverse the membrane as a helical segment. The Cytoplasmic portion of the chain corresponds to 224–245 (STHKQFESILKIQKTGKGKKKG).

In terms of assembly, tetramer of an alpha chain, a beta chain, and two disulfide linked gamma chains. Interacts with IGHE (via CH3 region). As to expression, expressed in leukocytes and pinealocytes at night (at protein level).

The protein localises to the cell membrane. It localises to the secreted. In terms of biological role, high-affinity receptor for immunoglobulin epsilon/IgE. Mediates IgE effector functions in myeloid cells. Upon IgE binding and antigen/allergen cross-linking initiates signaling pathways that lead to myeloid cell activation and differentiation. On mast cells, basophils and eosinophils stimulates the secretion of vasoactive amines, lipid mediators and cytokines that contribute to inflammatory response, tissue remodeling and cytotoxicity against microbes. Triggers the immediate hypersensitivity response to allergens as a host defense mechanism against helminth parasites, pathogenic bacteria and venom toxicity. When dysregulated, it can elicit harmful life-threatening allergic and anaphylactic reactions. This is High affinity immunoglobulin epsilon receptor subunit alpha (Fcer1a) from Rattus norvegicus (Rat).